A 356-amino-acid polypeptide reads, in one-letter code: UDP-N-acetylglucosamine--N-acetylmuramyl-(pentapeptide) pyrophosphoryl-undecaprenol N-acetylglucosamine transferase (356 aa).

Positions 166, 196, and 290 each coordinate UDP-N-acetyl-alpha-D-glucosamine.

It belongs to the glycosyltransferase 28 family. MurG subfamily.

The protein localises to the cell membrane. The catalysed reaction is Mur2Ac(oyl-L-Ala-gamma-D-Glu-L-Lys-D-Ala-D-Ala)-di-trans,octa-cis-undecaprenyl diphosphate + UDP-N-acetyl-alpha-D-glucosamine = beta-D-GlcNAc-(1-&gt;4)-Mur2Ac(oyl-L-Ala-gamma-D-Glu-L-Lys-D-Ala-D-Ala)-di-trans,octa-cis-undecaprenyl diphosphate + UDP + H(+). The protein operates within cell wall biogenesis; peptidoglycan biosynthesis. In terms of biological role, cell wall formation. Catalyzes the transfer of a GlcNAc subunit on undecaprenyl-pyrophosphoryl-MurNAc-pentapeptide (lipid intermediate I) to form undecaprenyl-pyrophosphoryl-MurNAc-(pentapeptide)GlcNAc (lipid intermediate II). The protein is UDP-N-acetylglucosamine--N-acetylmuramyl-(pentapeptide) pyrophosphoryl-undecaprenol N-acetylglucosamine transferase of Staphylococcus aureus (strain bovine RF122 / ET3-1).